Here is a 514-residue protein sequence, read N- to C-terminus: Glutamate--cysteine ligase (514 aa).

This sequence belongs to the glutamate--cysteine ligase type 1 family. Type 1 subfamily.

The catalysed reaction is L-cysteine + L-glutamate + ATP = gamma-L-glutamyl-L-cysteine + ADP + phosphate + H(+). It functions in the pathway sulfur metabolism; glutathione biosynthesis; glutathione from L-cysteine and L-glutamate: step 1/2. This chain is Glutamate--cysteine ligase, found in Enterobacter sp. (strain 638).